The sequence spans 829 residues: UBA domain-containing protein 8 (829 aa).

In terms of domain architecture, EH 1 spans 10 to 109 (EQQEFDRLLE…KQAKDDHHIK (100 aa)). One can recognise an EF-hand 1 domain in the interval 43–78 (LPQKILAKIWDYCDQEDKGSLDRNQVYACFRLISQA). The interval 93 to 121 (GDPPILPKQAKDDHHIKRSSSETADFTPF) is disordered. Phosphoserine occurs at positions 112 and 113. 2 EH domains span residues 129-225 (ERSE…AKSE) and 300-398 (DRSN…SDDT). Positions 333 to 368 (LDSEELARIWDTVDTQDRGYIDKDEFAVAMEIIKLR) constitute an EF-hand 2 domain. 2 stretches are compositionally biased toward polar residues: residues 466–506 (SFQD…TQSI) and 574–590 (TIPGSTSAALDDQQTTE). 3 disordered regions span residues 466–520 (SFQD…VNSS), 574–614 (TIPG…MRKL), and 724–785 (KPQV…QSYE). Positions 602 to 709 (EPTEEEQEEM…AKIDSIIADS (108 aa)) form a coiled coil. The span at 728–737 (TPAPPTPAPT) shows a compositional bias: pro residues. Over residues 764–774 (HANSSTPMNYV) the composition is skewed to polar residues. Residues 775-785 (SQPESPPQSYE) are compositionally biased toward low complexity. In terms of domain architecture, UBA spans 788 to 828 (QNDNELLQELLSMGFPREKAVIALEATNYDVNEAANILLSS).

In Schizosaccharomyces pombe (strain 972 / ATCC 24843) (Fission yeast), this protein is UBA domain-containing protein 8 (ucp8).